The following is a 416-amino-acid chain: MLLSVPLLLGLLGLAAADPAIYFKEQFLDGDAWTNRWVESKHKSDFGKFVLSSGKFYGDLEKDKGLQTSQDARFYALSAKFEPFSNKGQTLVVQFTVKHEQNIDCGGGYVKLFPSGLDQKDMHGDSEYNIMFGPDICGPGTKKVHVIFNYKGKNVLINKDIRCKDDEFTHLYTLIVRPDNTYEVKIDNSQVESGSLEDDWDFLPPKKIKDPDAAKPEDWDERAKIDDPTDSKPEDWDKPEHIPDPDAKKPEDWDEEMDGEWEPPVIQNPEYKGEWKPRQIDNPDYKGTWIHPEIDNPEYSPDANIYAYDSFAVLGLDLWQVKSGTIFDNFLITNDEAYAEEFGNETWGVTKAAEKQMKDKQDEEQRLKEEEEDKKRKEEEEAEDKEDDDDRDEDEDEEDEKEEDEEESPGQAKDEL.

The first 17 residues, 1-17, serve as a signal peptide directing secretion; the sequence is MLLSVPLLLGLLGLAAA. The tract at residues 18–197 is N-domain; it reads DPAIYFKEQF…NSQVESGSLE (180 aa). A Ca(2+)-binding site is contributed by Q26. N6-acetyllysine is present on K48. K62 and K64 together coordinate Ca(2+). Position 64 is an N6-(2-hydroxyisobutyryl)lysine (K64). C105 and C137 form a disulfide bridge. An alpha-D-glucoside-binding residues include Y109, K111, Y128, and D135. Position 159 is an N6-acetyllysine (K159). Residues 191 to 202 form a 1-1 repeat; that stretch reads VESGSLEDDWDF. The interval 191-255 is 4 X approximate repeats; that stretch reads VESGSLEDDW…DAKKPEDWDE (65 aa). The tract at residues 193-277 is disordered; the sequence is SGSLEDDWDF…NPEYKGEWKP (85 aa). A P-domain region spans residues 198–308; the sequence is DDWDFLPPKK…YSPDANIYAY (111 aa). A compositionally biased stretch (basic and acidic residues) spans 207–251; sequence KIKDPDAAKPEDWDERAKIDDPTDSKPEDWDKPEHIPDPDAKKPE. K209 carries the post-translational modification N6-acetyllysine. 6 consecutive repeat copies span residues 210–221, 227–238, 244–255, 259–269, 273–283, and 287–297. Residues 237–270 form an interaction with PPIB region; sequence DKPEHIPDPDAKKPEDWDEEMDGEWEPPVIQNPE. Positions 252 to 261 are enriched in acidic residues; it reads DWDEEMDGEW. A 3 X approximate repeats region spans residues 259 to 297; it reads GEWEPPVIQNPEYKGEWKPRQIDNPDYKGTWIHPEIDNP. Positions 309–416 are C-domain; sequence DSFAVLGLDL…ESPGQAKDEL (108 aa). An alpha-D-glucoside is bound at residue D317. D328 lines the Ca(2+) pocket. Positions 350 to 416 are disordered; that stretch reads TKAAEKQMKD…ESPGQAKDEL (67 aa). A compositionally biased stretch (basic and acidic residues) spans 352 to 379; it reads AAEKQMKDKQDEEQRLKEEEEDKKRKEE. The segment covering 380 to 408 has biased composition (acidic residues); it reads EEAEDKEDDDDRDEDEDEEDEKEEDEEES. A Prevents secretion from ER motif is present at residues 413–416; it reads KDEL.

This sequence belongs to the calreticulin family. In terms of assembly, monomer. Interacts with GABARAP, NR3C1, PDIA3/ERp57 and TRIM21. Interacts (via P-domain) with PDIA5. Interacts with PPIB. Interacts with SPACA9. Component of an EIF2 complex at least composed of CELF1/CUGBP1, CALR, CALR3, EIF2S1, EIF2S2, HSP90B1 and HSPA5. Interacts with CLCC1.

The protein resides in the endoplasmic reticulum lumen. It is found in the cytoplasm. The protein localises to the cytosol. Its subcellular location is the cytolytic granule. It localises to the secreted. The protein resides in the extracellular space. It is found in the extracellular matrix. The protein localises to the cell surface. Its subcellular location is the sarcoplasmic reticulum lumen. It localises to the cytoplasmic vesicle. The protein resides in the secretory vesicle. It is found in the cortical granule. Functionally, calcium-binding chaperone that promotes folding, oligomeric assembly and quality control in the endoplasmic reticulum (ER) via the calreticulin/calnexin cycle. This lectin interacts transiently with almost all of the monoglucosylated glycoproteins that are synthesized in the ER. Interacts with the DNA-binding domain of NR3C1 and mediates its nuclear export. Involved in maternal gene expression regulation. May participate in oocyte maturation via the regulation of calcium homeostasis. Present in the cortical granules of non-activated oocytes, is exocytosed during the cortical reaction in response to oocyte activation and might participate in the block to polyspermy. This is Calreticulin (Calr) from Mus musculus (Mouse).